Consider the following 286-residue polypeptide: Putative 2-aminoethylphosphonate transport system permease protein PhnU (286 aa).

6 consecutive transmembrane segments (helical) span residues 19–39, 76–96, 111–131, 150–170, 202–222, and 254–274; these read WLLLPLLVLATLFFWPLSLIV, FFATAGCLLLGSAMSLILVFI, FIALPTFLITLAFTFIYGSAG, FLYSMQGVILAEITVFTPLVM, VIFPAALPALMAGGSLCLLLT, and YTVACMIALINIVLSLGLFSL. The ABC transmembrane type-1 domain occupies 68-275; it reads LLNTLQIAFF…VLSLGLFSLY (208 aa).

It belongs to the binding-protein-dependent transport system permease family.

It is found in the cell inner membrane. Functionally, probably part of the PhnSTUV complex (TC 3.A.1.11.5) involved in 2-aminoethylphosphonate import. Probably responsible for the translocation of the substrate across the membrane. The protein is Putative 2-aminoethylphosphonate transport system permease protein PhnU (phnU) of Salmonella choleraesuis (strain SC-B67).